Reading from the N-terminus, the 205-residue chain is CASP-like protein 2A1 (205 aa).

The interval 1–25 (MDKSKVSTAVGGETPVGLITGSRDD) is disordered. Residues 1 to 34 (MDKSKVSTAVGGETPVGLITGSRDDELESGSMRT) lie on the Cytoplasmic side of the membrane. The chain crosses the membrane as a helical span at residues 35–55 (AETVLRLVPMAFCISALVLML). Topologically, residues 56–76 (KNSQTNDFGTLSYSDLGAFRY) are extracellular. A helical membrane pass occupies residues 77–97 (LVHANGICAGYSLLSAIIVAM). Over 98–105 (PRPSTMSR) the chain is Cytoplasmic. The helical transmembrane segment at 106-126 (AWTFFFLDQVLTYVILAAAAV) threads the bilayer. At 127 to 156 (SVEALYLARKGDIAITWSAACVSFGGFCHK) the chain is on the extracellular side. A helical transmembrane segment spans residues 157 to 177 (AITSAVITFIVVVCYALLSLV). The Cytoplasmic segment spans residues 178–205 (SSYKLFSRYGAPDVSYPGKGIEVAAFHS).

The protein belongs to the Casparian strip membrane proteins (CASP) family. In terms of assembly, homodimer and heterodimers.

It localises to the cell membrane. The chain is CASP-like protein 2A1 from Ricinus communis (Castor bean).